The chain runs to 661 residues: MGDQKRSFINVMIGDFVAVPTKFANFIRGQISEVVKLEVPNGKTYDVQVAKEHNELVLRSGWGAFARDYELKQCDILVFAYSGSSRFKVRIFNPSGCEKELSCVMMNNTPCGHEGSMSYHDNHLQSPSESSSFFNISLPPHSPFQELSGVDSTSLLVSDPPNMQQFCLRCSWTNPKRLAKPSLAIASLSHQHLAFDKTRCMFILKIENDTLKTILKMFAKNVQGLISGVAKLEVPDGKTYDVEISKEHNELVFRSGWEVFAIAYELEQGDILAFGYSGNSHFKVQIFNPSNCEKELSCVVMNRSISDDNHRQSPRRERMNKPSTTCMDCITNHYWLHMDDRERYFFKVMMSVSDIKDELAIPKKFAANVRGKIPEQVRLEVSDDVPSSEDIKDPMSSGGLQKSKKSCYVLPMLYNMTSAQESEVLALEKKIQPQIPLYITAMDKTSVASGSLVFCKDYAVRYLLDQNRTIKLCQSGGSKTWDISLDMDTDDLYALSTGWLDFFRCNLLQEGDICVFEASKSKRGVALTFHPFKESHCPKSSEYTLSTKSPTRRVPKRDYFATNLTNLTDQQERKCFSVKYASKYLPHKDQNMRLRLPETKYKCKAALHIDTSTNLHKLLKGWGKFVNDNKLEIHDICLFQLMKNKKKLTMTVHIIRKGECS.

4 consecutive DNA-binding regions (TF-B3) follow at residues 2 to 95 (GDQK…FNPS), 197 to 290 (KTRC…FNPS), 437 to 535 (LYIT…FKES), and 562 to 658 (TNLT…IRKG).

It is found in the nucleus. In Oryza sativa subsp. japonica (Rice), this protein is B3 domain-containing protein Os12g0591400.